The following is a 274-amino-acid chain: MNKEFIKSIVVSSPWEKVEIARHKDRPTGKYYIDNIFKDFIEFHGDRLFGDDKAIIGGIASFEDISVTVIAITKGANTNENIERNFGMPNPEGYRKALRLMKQAEKFNRPVICFIDTPGAFCGVGAEERGQGSAIANNLFELSRLKTPIISIVIGEGGSGGALALTVADKILMLENAVYSILSPEGFASILWKDSKRVKEAANVMKITAQDLNEFGIIDTVIKEPRGGAHKNPQKQVTLIKKEIMNAMNEMKNIETNQMINERYDKFRKIGTLE.

The region spanning asparagine 2 to glutamate 250 is the CoA carboxyltransferase C-terminal domain.

This sequence belongs to the AccA family. In terms of assembly, acetyl-CoA carboxylase is a heterohexamer composed of biotin carboxyl carrier protein (AccB), biotin carboxylase (AccC) and two subunits each of ACCase subunit alpha (AccA) and ACCase subunit beta (AccD).

The protein localises to the cytoplasm. The catalysed reaction is N(6)-carboxybiotinyl-L-lysyl-[protein] + acetyl-CoA = N(6)-biotinyl-L-lysyl-[protein] + malonyl-CoA. Its pathway is lipid metabolism; malonyl-CoA biosynthesis; malonyl-CoA from acetyl-CoA: step 1/1. Functionally, component of the acetyl coenzyme A carboxylase (ACC) complex. First, biotin carboxylase catalyzes the carboxylation of biotin on its carrier protein (BCCP) and then the CO(2) group is transferred by the carboxyltransferase to acetyl-CoA to form malonyl-CoA. This Clostridium botulinum (strain Alaska E43 / Type E3) protein is Acetyl-coenzyme A carboxylase carboxyl transferase subunit alpha.